The chain runs to 466 residues: UDP-N-acetylmuramoylalanine--D-glutamate ligase (466 aa).

ATP is bound at residue 121 to 127; it reads GTNGKST.

Belongs to the MurCDEF family.

It localises to the cytoplasm. The catalysed reaction is UDP-N-acetyl-alpha-D-muramoyl-L-alanine + D-glutamate + ATP = UDP-N-acetyl-alpha-D-muramoyl-L-alanyl-D-glutamate + ADP + phosphate + H(+). It participates in cell wall biogenesis; peptidoglycan biosynthesis. Its function is as follows. Cell wall formation. Catalyzes the addition of glutamate to the nucleotide precursor UDP-N-acetylmuramoyl-L-alanine (UMA). This chain is UDP-N-acetylmuramoylalanine--D-glutamate ligase, found in Nitrobacter winogradskyi (strain ATCC 25391 / DSM 10237 / CIP 104748 / NCIMB 11846 / Nb-255).